Consider the following 283-residue polypeptide: Thymidylate synthase (283 aa).

Arg22 contributes to the dUMP binding site. Residue Cys160 is the Nucleophile of the active site. Residues 180 to 183 (RSAD), Asn191, and 221 to 223 (HIY) each bind dUMP. (6R)-5,10-methylene-5,6,7,8-tetrahydrofolate is bound at residue Asp183. Ser282 is a (6R)-5,10-methylene-5,6,7,8-tetrahydrofolate binding site.

It belongs to the thymidylate synthase family. Bacterial-type ThyA subfamily. In terms of assembly, homodimer.

The protein resides in the cytoplasm. The enzyme catalyses dUMP + (6R)-5,10-methylene-5,6,7,8-tetrahydrofolate = 7,8-dihydrofolate + dTMP. It functions in the pathway pyrimidine metabolism; dTTP biosynthesis. Functionally, catalyzes the reductive methylation of 2'-deoxyuridine-5'-monophosphate (dUMP) to 2'-deoxythymidine-5'-monophosphate (dTMP) while utilizing 5,10-methylenetetrahydrofolate (mTHF) as the methyl donor and reductant in the reaction, yielding dihydrofolate (DHF) as a by-product. This enzymatic reaction provides an intracellular de novo source of dTMP, an essential precursor for DNA biosynthesis. The chain is Thymidylate synthase from Glaesserella parasuis serovar 5 (strain SH0165) (Haemophilus parasuis).